Consider the following 424-residue polypeptide: MRRVLRLLLGCFLTELCARVCRAQERAGHGQLAQLGGVLLLAGGNRSGAASGEASEGAEASDAPPTRAPTPDFCRGYFDVMGQWDPPFNCSSGDFIFCCGTCGFRFCCTFKKRRLNQSTCTNYDTPLWLNTGKPPARKDDPLHDPTKDKTNLIVYIICGVVAVMVLVGIFTKLGLEKAHRPQREHMSRALADVMRPQGHCNTDHMERDLNIVVHVQHYENMDTRTPINNLHATQMNNAVPTSPLLQQMGHPHSYPNLGQISNPYEQQPPGKELNKYASLKAVGSSDGDWAVSTLKSPKADKVNDDFYTKRRHLAELAAKGNLPLHPVRVEDEPRAFSPEHGPAKQNGQKSRTNKMPPHPLAYTSTTNFKGWDPNEQSLRRQAYSNKGKLGTAETGSSDPLGTRPQHYPPPQPYFITNSKTEVTV.

The first 23 residues, 1 to 23 (MRRVLRLLLGCFLTELCARVCRA), serve as a signal peptide directing secretion. Residues 24 to 149 (QERAGHGQLA…DPLHDPTKDK (126 aa)) lie on the Extracellular side of the membrane. N-linked (GlcNAc...) asparagine glycosylation is found at asparagine 45, asparagine 89, and asparagine 116. Residues 150–170 (TNLIVYIICGVVAVMVLVGIF) form a helical membrane-spanning segment. Over 171 to 424 (TKLGLEKAHR…ITNSKTEVTV (254 aa)) the chain is Cytoplasmic. A disordered region spans residues 333–424 (PRAFSPEHGP…ITNSKTEVTV (92 aa)). Polar residues predominate over residues 414 to 424 (FITNSKTEVTV).

The protein belongs to the shisa family. SHISA9 subfamily. Component of some AMPA receptors (ionotropic glutamate receptors) complex, at least composed of some AMPA receptor (GRIA1, GRIA2 and/or GRIA3), CACNG2 and SHISA9, as well as low level of DLG4.

It is found in the cell projection. Its subcellular location is the dendritic spine membrane. The protein resides in the synapse. Functionally, regulator of short-term neuronal synaptic plasticity in the dentate gyrus. Associates with AMPA receptors (ionotropic glutamate receptors) in synaptic spines and promotes AMPA receptor desensitization at excitatory synapses. The sequence is that of Protein shisa-9 (SHISA9) from Homo sapiens (Human).